Here is a 559-residue protein sequence, read N- to C-terminus: Fanconi-associated nuclease 1 homolog (559 aa).

Residues E386, D507, E522, and V523 each contribute to the Mn(2+) site. One can recognise a VRR-NUC domain in the interval 443 to 555 (DGSYRDAIRC…MPVAVCYVRW (113 aa)).

This sequence belongs to the FAN1 family. The cofactor is Mn(2+). Requires Mg(2+) as cofactor.

The enzyme catalyses Hydrolytically removes 5'-nucleotides successively from the 3'-hydroxy termini of 3'-hydroxy-terminated oligonucleotides.. Its function is as follows. Nuclease required for the repair of DNA interstrand cross-links (ICL). Acts as a 5'-3' exonuclease that anchors at a cut end of DNA and cleaves DNA successively at every third nucleotide, allowing to excise an ICL from one strand through flanking incisions. Also has endonuclease activity toward 5'-flaps. The sequence is that of Fanconi-associated nuclease 1 homolog from Pseudomonas aeruginosa (strain ATCC 15692 / DSM 22644 / CIP 104116 / JCM 14847 / LMG 12228 / 1C / PRS 101 / PAO1).